The chain runs to 809 residues: uncharacterized protein (809 aa).

Residues histidine 19–valine 206 form the MHYT domain. 7 helical membrane passes run leucine 23–serine 43, leucine 57–valine 77, threonine 92–alanine 112, glycine 122–valine 142, alanine 152–alanine 172, glycine 186–valine 206, and threonine 224–isoleucine 244. The PAS domain occupies glutamate 254–arginine 317. Residues glutamate 402–arginine 536 enclose the GGDEF domain. An EAL domain is found at arginine 545–aspartate 795.

It is found in the cell membrane. This is an uncharacterized protein from Caulobacter vibrioides (strain ATCC 19089 / CIP 103742 / CB 15) (Caulobacter crescentus).